Reading from the N-terminus, the 563-residue chain is MSINDKALSDVERIKAESQGLRGTLRESLHNPVTGALAEDDVQVIKFHGIYQQDYRDLRAERHQQKLEPLYQFMARLRLPGGVLSGAQWLALGDIARTYGNASLRITSRQSIQFHGLLKPHLRPVLQALDRALLDTVSACGDVNRNVIASSAPQISAFHAEAYGWAQKIAEHLLPQSHAYHEIWLGGQQITAPEEDLLYGSTYLPRKFKIAIAVPPHNDVDVLTQDLGFIAIHEEGRLAGFNVCVGGGLGRSHNKPDTYSRLADVCGFCAPGQVLAIAEAVLITQRDHGDRSNRSHARLKYTVDRMGLDRFMEEVQQRTGFSLAPPRPFHFETSGDRFGWLENDDGTACLTLFIPGGRVADGDIPLLSGLDALARLHHGEIRLTCNQNLLIAGISPAERPVVETVLAEYGLNRLLNLAPVRAHAMACVALPTCPLAMAEAERYLPVFLDRIEALLAEVGLEGEALTVRMTGCPNGCARPYLAEIGLVGKAPGLYDLYLGGDRTGMRLNALYREALDEEALLDALRPLLKRFAGQRWAGETFGDFVRRQDLLPPDPGLPHTGRR.

The [4Fe-4S] cluster site is built by Cys-427, Cys-433, Cys-472, and Cys-476. A siroheme-binding site is contributed by Cys-476.

It belongs to the nitrite and sulfite reductase 4Fe-4S domain family. In terms of assembly, alpha(8)-beta(8). The alpha component is a flavoprotein, the beta component is a hemoprotein. It depends on siroheme as a cofactor. [4Fe-4S] cluster serves as cofactor.

It carries out the reaction hydrogen sulfide + 3 NADP(+) + 3 H2O = sulfite + 3 NADPH + 4 H(+). It functions in the pathway sulfur metabolism; hydrogen sulfide biosynthesis; hydrogen sulfide from sulfite (NADPH route): step 1/1. In terms of biological role, component of the sulfite reductase complex that catalyzes the 6-electron reduction of sulfite to sulfide. This is one of several activities required for the biosynthesis of L-cysteine from sulfate. In Acidithiobacillus ferrooxidans (strain ATCC 53993 / BNL-5-31) (Leptospirillum ferrooxidans (ATCC 53993)), this protein is Sulfite reductase [NADPH] hemoprotein beta-component.